The sequence spans 202 residues: Small ribosomal subunit protein uS4c (202 aa).

Residues 90-158 enclose the S4 RNA-binding domain; that stretch reads MRLDNIIFRL…MKRSRDSYEK (69 aa).

This sequence belongs to the universal ribosomal protein uS4 family. Part of the 30S ribosomal subunit. Contacts protein S5. The interaction surface between S4 and S5 is involved in control of translational fidelity.

It is found in the plastid. The protein localises to the chloroplast. Its function is as follows. One of the primary rRNA binding proteins, it binds directly to 16S rRNA where it nucleates assembly of the body of the 30S subunit. Functionally, with S5 and S12 plays an important role in translational accuracy. This Anthoceros angustus (Hornwort) protein is Small ribosomal subunit protein uS4c (rps4).